We begin with the raw amino-acid sequence, 177 residues long: Nucleoside triphosphate/diphosphate phosphatase (177 aa).

R23 acts as the Proton donor in catalysis. The Mg(2+) site is built by N87, D103, D105, D107, D120, and E123.

The protein belongs to the Ntdp family. The cofactor is Mg(2+).

The catalysed reaction is a ribonucleoside 5'-triphosphate + H2O = a ribonucleoside 5'-diphosphate + phosphate + H(+). It catalyses the reaction a ribonucleoside 5'-diphosphate + H2O = a ribonucleoside 5'-phosphate + phosphate + H(+). In terms of biological role, has nucleoside phosphatase activity towards nucleoside triphosphates and nucleoside diphosphates. This chain is Nucleoside triphosphate/diphosphate phosphatase, found in Streptococcus pyogenes serotype M3 (strain ATCC BAA-595 / MGAS315).